The following is a 361-amino-acid chain: Molybdenum import ATP-binding protein ModC 1 (361 aa).

The ABC transporter domain occupies Met-1–Asp-237. Position 35–42 (Gly-35–Thr-42) interacts with ATP. The region spanning Asp-296 to Gly-361 is the Mop domain.

The protein belongs to the ABC transporter superfamily. Molybdate importer (TC 3.A.1.8) family. In terms of assembly, the complex is composed of two ATP-binding proteins (ModC), two transmembrane proteins (ModB) and a solute-binding protein (ModA).

It is found in the cell inner membrane. The catalysed reaction is molybdate(out) + ATP + H2O = molybdate(in) + ADP + phosphate + H(+). Part of the ABC transporter complex ModABC involved in molybdenum import. Responsible for energy coupling to the transport system. The polypeptide is Molybdenum import ATP-binding protein ModC 1 (Azotobacter vinelandii).